We begin with the raw amino-acid sequence, 141 residues long: Nucleoside diphosphate kinase (141 aa).

ATP-binding residues include lysine 11, phenylalanine 59, arginine 87, threonine 93, arginine 104, and asparagine 114. Catalysis depends on histidine 117, which acts as the Pros-phosphohistidine intermediate.

It belongs to the NDK family. As to quaternary structure, homotetramer. Requires Mg(2+) as cofactor.

The protein localises to the cytoplasm. The catalysed reaction is a 2'-deoxyribonucleoside 5'-diphosphate + ATP = a 2'-deoxyribonucleoside 5'-triphosphate + ADP. The enzyme catalyses a ribonucleoside 5'-diphosphate + ATP = a ribonucleoside 5'-triphosphate + ADP. Functionally, major role in the synthesis of nucleoside triphosphates other than ATP. The ATP gamma phosphate is transferred to the NDP beta phosphate via a ping-pong mechanism, using a phosphorylated active-site intermediate. The sequence is that of Nucleoside diphosphate kinase from Serratia proteamaculans (strain 568).